The chain runs to 487 residues: Beta-barrel assembly-enhancing protease (487 aa).

The first 27 residues, 1–27, serve as a signal peptide directing secretion; the sequence is MFRQLKKNLVATLIAAMTIGQVAPAFA. His136 is a Zn(2+) binding site. Residue Glu137 is part of the active site. Positions 140 and 201 each coordinate Zn(2+). Asp205 (proton donor) is an active-site residue. TPR repeat units follow at residues 309–342, 344–376, 377–409, and 427–460; these read RAAQ…EPGN, WYLD…RTNP, VLQL…NKDD, and DQEL…VKLG.

It belongs to the peptidase M48 family. BepA subfamily. Requires Zn(2+) as cofactor.

The protein resides in the periplasm. Functions both as a chaperone and a metalloprotease. Maintains the integrity of the outer membrane by promoting either the assembly or the elimination of outer membrane proteins, depending on their folding state. The chain is Beta-barrel assembly-enhancing protease from Escherichia coli O157:H7.